Consider the following 407-residue polypeptide: Cation efflux system protein CusB (407 aa).

The signal sequence occupies residues 1–28; it reads MKKIALIIGSMIAGGIISAAGFTWVAKA.

Belongs to the membrane fusion protein (MFP) (TC 8.A.1) family. In terms of assembly, the cus efflux system is composed of CusA, CusB, CusC and CusF.

Its function is as follows. Part of a cation efflux system that mediates resistance to copper and silver. This Escherichia coli (strain K12) protein is Cation efflux system protein CusB (cusB).